A 393-amino-acid polypeptide reads, in one-letter code: MGQLLSHPLTEKTIEYNEYKNNQASTGIVPRFYNCVGSMQGYRLTQEDAHLIRNENSVVYVRFFNPFIDKYETLSLNVFAVFDGHGGDDCSKFLSGGRHHRDGNGSSNGNGEPNAGLIKWIAYSFENHHYTSTTNNDSSKFKRSFNTLEGLVSQIFKDAFILQDEELYRHFANSSCGSTAVVACIINEESLYVANCGDSRCILSSKSNGIKTMSFDHKPQHIGELIRINDNGGTVSLGRVGGVLALSRAFSDFQFKRGVTYPHRRTKLTNITQNLTYGTPPQEAQVTVEPDVLMHKIDYSKDEFLVLACDGIWDIYNNKQLIHFIKYHLVSGTKLDTIITKLLDHGIAQANSNTGVGFDNMTAIIVVLNRKGETLQDWFNKMKTRLERERGLV.

The PPM-type phosphatase domain occupies 33 to 368 (YNCVGSMQGY…DNMTAIIVVL (336 aa)). Mn(2+) contacts are provided by Asp83, Gly84, Asp310, and Asp359.

This sequence belongs to the PP2C family. Requires Mg(2+) as cofactor. Mn(2+) serves as cofactor.

It catalyses the reaction O-phospho-L-seryl-[protein] + H2O = L-seryl-[protein] + phosphate. It carries out the reaction O-phospho-L-threonyl-[protein] + H2O = L-threonyl-[protein] + phosphate. The sequence is that of Protein phosphatase 2C homolog 4 (PTC4) from Saccharomyces cerevisiae (strain ATCC 204508 / S288c) (Baker's yeast).